A 405-amino-acid chain; its full sequence is Acetate kinase (405 aa).

Residue Asn-7 participates in Mg(2+) binding. Lys-14 provides a ligand contact to ATP. Arg-91 is a substrate binding site. The active-site Proton donor/acceptor is the Asp-148. ATP-binding positions include 208–212 (HLGNG) and 283–285 (DFR). Glu-384 lines the Mg(2+) pocket.

Belongs to the acetokinase family. In terms of assembly, homodimer. Mg(2+) serves as cofactor. Requires Mn(2+) as cofactor.

It localises to the cytoplasm. The enzyme catalyses acetate + ATP = acetyl phosphate + ADP. Its pathway is metabolic intermediate biosynthesis; acetyl-CoA biosynthesis; acetyl-CoA from acetate: step 1/2. In terms of biological role, catalyzes the formation of acetyl phosphate from acetate and ATP. Can also catalyze the reverse reaction. This is Acetate kinase from Dictyoglomus turgidum (strain DSM 6724 / Z-1310).